The primary structure comprises 155 residues: Ribosomal RNA large subunit methyltransferase H (155 aa).

Residues Leu-72, Gly-103, and 122-127 (LSPLTL) contribute to the S-adenosyl-L-methionine site.

It belongs to the RNA methyltransferase RlmH family. As to quaternary structure, homodimer.

Its subcellular location is the cytoplasm. The enzyme catalyses pseudouridine(1915) in 23S rRNA + S-adenosyl-L-methionine = N(3)-methylpseudouridine(1915) in 23S rRNA + S-adenosyl-L-homocysteine + H(+). Functionally, specifically methylates the pseudouridine at position 1915 (m3Psi1915) in 23S rRNA. The protein is Ribosomal RNA large subunit methyltransferase H of Pasteurella multocida (strain Pm70).